The sequence spans 90 residues: Mitochondrial import inner membrane translocase subunit Tim8 A (90 aa).

Positions 36–59 match the Twin CX3C motif motif; sequence CWDKCMDKPGPKLDSRAEMCFVNC. Disulfide bonds link cysteine 36-cysteine 59 and cysteine 40-cysteine 55.

The protein belongs to the small Tim family. As to quaternary structure, heterohexamer; composed of 3 copies of TIMM8A and 3 copies of TIMM13, named soluble 70 kDa complex. Associates with the TIM22 complex, whose core is composed of TIMM22.

Its subcellular location is the mitochondrion inner membrane. Its function is as follows. Mitochondrial intermembrane chaperone that participates in the import and insertion of some multi-pass transmembrane proteins into the mitochondrial inner membrane. Also required for the transfer of beta-barrel precursors from the TOM complex to the sorting and assembly machinery (SAM complex) of the outer membrane. Acts as a chaperone-like protein that protects the hydrophobic precursors from aggregation and guide them through the mitochondrial intermembrane space. The TIMM8-TIMM13 complex mediates the import of some proteins while the predominant TIMM9-TIMM10 70 kDa complex mediates the import of much more proteins. This chain is Mitochondrial import inner membrane translocase subunit Tim8 A (timm8a), found in Takifugu rubripes (Japanese pufferfish).